The chain runs to 451 residues: D-ribitol-5-phosphate cytidylyltransferase (451 aa).

Positions 1 to 29 (MEAGPPGSARPAEPGPCLSGQRGADHTAS) are disordered.

This sequence belongs to the IspD/TarI cytidylyltransferase family. IspD subfamily. Homodimer. Ubiquitously expressed, with high expression in brain.

It is found in the cytoplasm. The protein localises to the cytosol. It carries out the reaction D-ribitol 5-phosphate + CTP + H(+) = CDP-L-ribitol + diphosphate. The catalysed reaction is D-ribose 5-phosphate + CTP + H(+) = CDP-D-ribose + diphosphate. The enzyme catalyses D-ribulose 5-phosphate + CTP + H(+) = CDP-D-ribulose + diphosphate. Its pathway is protein modification; protein glycosylation. Its function is as follows. Cytidylyltransferase required for protein O-linked mannosylation. Catalyzes the formation of CDP-ribitol nucleotide sugar from D-ribitol 5-phosphate. CDP-ribitol is a substrate of FKTN during the biosynthesis of the phosphorylated O-mannosyl trisaccharide (N-acetylgalactosamine-beta-3-N-acetylglucosamine-beta-4-(phosphate-6-)mannose), a carbohydrate structure present in alpha-dystroglycan (DAG1), which is required for binding laminin G-like domain-containing extracellular proteins with high affinity. Shows activity toward other pentose phosphate sugars and mediates formation of CDP-ribulose or CDP-ribose using CTP and ribulose-5-phosphate or ribose-5-phosphate, respectively. Not Involved in dolichol production. The chain is D-ribitol-5-phosphate cytidylyltransferase from Homo sapiens (Human).